Reading from the N-terminus, the 240-residue chain is Large ribosomal subunit protein bL25 (240 aa).

2 disordered regions span residues 1 to 20 and 220 to 240; these read MAEN…GPAR and PAAG…KGKK. Over residues 220-229 the composition is skewed to low complexity; sequence PAAGAAPAKG. Basic and acidic residues predominate over residues 230 to 240; that stretch reads GEAKGGDKGKK.

The protein belongs to the bacterial ribosomal protein bL25 family. CTC subfamily. As to quaternary structure, part of the 50S ribosomal subunit; part of the 5S rRNA/L5/L18/L25 subcomplex. Contacts the 5S rRNA. Binds to the 5S rRNA independently of L5 and L18.

In terms of biological role, this is one of the proteins that binds to the 5S RNA in the ribosome where it forms part of the central protuberance. This is Large ribosomal subunit protein bL25 from Anaeromyxobacter dehalogenans (strain 2CP-C).